The following is a 421-amino-acid chain: Zinc metalloproteinase-disintegrin-like crotastatin (421 aa).

The region spanning 10–206 is the Peptidase M12B domain; the sequence is KYVKLFLVAD…NMPQCILKKP (197 aa). The N-linked (GlcNAc...) asparagine glycan is linked to Asn29. 3 disulfides stabilise this stretch: Cys121/Cys201, Cys161/Cys185, and Cys163/Cys168. His146 lines the Zn(2+) pocket. Residue Glu147 is part of the active site. Positions 150 and 156 each coordinate Zn(2+). The region spanning 214–299 is the Disintegrin domain; it reads PAVCGNYFVE…TECTDRFQRN (86 aa). Residues Val216, Asn219, Phe221, Glu223, Glu226, and Asp229 each coordinate Ca(2+). Cystine bridges form between Cys217–Cys246, Cys228–Cys241, Cys230–Cys236, Cys240–Cys263, Cys254–Cys260, Cys259–Cys285, Cys272–Cys292, Cys279–Cys310, Cys303–Cys315, Cys322–Cys372, Cys337–Cys383, Cys350–Cys360, Cys367–Cys409, and Cys403–Cys414. Positions 278–280 match the D/ECD-tripeptide motif; it reads ECD. Residues Asp280, Met281, Asp283, Asp294, and Arg295 each coordinate Ca(2+).

The protein belongs to the venom metalloproteinase (M12B) family. P-III subfamily. P-IIIc sub-subfamily. As to quaternary structure, homodimer; disulfide-linked. Zn(2+) serves as cofactor. Expressed by the venom gland.

The protein resides in the secreted. Snake venom zinc metalloprotease that induces apoptosis in vascular endothelial cells (VEC), without degrading the extracellular matrix (it cannot cleave collagen) or inhibiting adhesion of VEC. Has also fibrinogenolytic and hemorrhagic activities. The protein is Zinc metalloproteinase-disintegrin-like crotastatin of Crotalus durissus terrificus (South American rattlesnake).